The primary structure comprises 260 residues: MSTNNSVLVLKVGGALLQCEMGMARLMDTAAAMIANGQQVLMVHGGGCLVDEQLAANGMETVKLEGLRVTPPEQMPIIAGALAGTSNKILQGAATKAGIVSVGMCLADGNTVSAKIKDERLGLVGEVYPKDATYLKFILSQGWMPICSSIAMMDDGQMLNVNADQAATVLAKLVGGKLVLLSDVSGVLDGKGQLIPSLNGQQIADLVKQGVIEKGMKVKVEAALEVAQWMGQAVQVASWRDASQLVALAKGEAVGTQIQP.

Residues 46–47 (GG), arginine 68, and asparagine 160 each bind substrate.

It belongs to the acetylglutamate kinase family. ArgB subfamily.

The protein resides in the cytoplasm. It catalyses the reaction N-acetyl-L-glutamate + ATP = N-acetyl-L-glutamyl 5-phosphate + ADP. Its pathway is amino-acid biosynthesis; L-arginine biosynthesis; N(2)-acetyl-L-ornithine from L-glutamate: step 2/4. In terms of biological role, catalyzes the ATP-dependent phosphorylation of N-acetyl-L-glutamate. This chain is Acetylglutamate kinase, found in Shewanella oneidensis (strain ATCC 700550 / JCM 31522 / CIP 106686 / LMG 19005 / NCIMB 14063 / MR-1).